The primary structure comprises 210 residues: RNA chaperone ProQ (210 aa).

2 stretches are compositionally biased toward basic and acidic residues: residues 103 to 124 (LKES…EKAK) and 132 to 144 (RKAD…DKPK). Residues 103-148 (LKESKERVFASRRTNNKEEKAKQPRRPAPRKADAAAKSDKPKAAPK) form a disordered region.

It belongs to the ProQ family.

It localises to the cytoplasm. Functionally, RNA chaperone with significant RNA binding, RNA strand exchange and RNA duplexing activities. The protein is RNA chaperone ProQ of Aeromonas salmonicida (strain A449).